We begin with the raw amino-acid sequence, 458 residues long: Argininosuccinate lyase (458 aa).

This sequence belongs to the lyase 1 family. Argininosuccinate lyase subfamily.

Its subcellular location is the cytoplasm. It catalyses the reaction 2-(N(omega)-L-arginino)succinate = fumarate + L-arginine. The protein operates within amino-acid biosynthesis; L-arginine biosynthesis; L-arginine from L-ornithine and carbamoyl phosphate: step 3/3. This chain is Argininosuccinate lyase, found in Trichlorobacter lovleyi (strain ATCC BAA-1151 / DSM 17278 / SZ) (Geobacter lovleyi).